The sequence spans 230 residues: Large ribosomal subunit protein bL25 (230 aa).

The protein belongs to the bacterial ribosomal protein bL25 family. CTC subfamily. Part of the 50S ribosomal subunit; part of the 5S rRNA/L5/L18/L25 subcomplex. Contacts the 5S rRNA. Binds to the 5S rRNA independently of L5 and L18.

Functionally, this is one of the proteins that binds to the 5S RNA in the ribosome where it forms part of the central protuberance. The chain is Large ribosomal subunit protein bL25 (rplY) from Rhodopseudomonas palustris (strain ATCC BAA-98 / CGA009).